Reading from the N-terminus, the 149-residue chain is Ribosome-binding factor A (149 aa).

Over residues 116-125 the composition is skewed to basic and acidic residues; it reads TLFEELHPNP. Positions 116–149 are disordered; sequence TLFEELHPNPEEDDGDTDAETLLEDSESGIERET. Acidic residues predominate over residues 126 to 143; the sequence is EEDDGDTDAETLLEDSES.

It belongs to the RbfA family. Monomer. Binds 30S ribosomal subunits, but not 50S ribosomal subunits or 70S ribosomes.

It localises to the cytoplasm. Its function is as follows. One of several proteins that assist in the late maturation steps of the functional core of the 30S ribosomal subunit. Associates with free 30S ribosomal subunits (but not with 30S subunits that are part of 70S ribosomes or polysomes). Required for efficient processing of 16S rRNA. May interact with the 5'-terminal helix region of 16S rRNA. This Leptospira biflexa serovar Patoc (strain Patoc 1 / Ames) protein is Ribosome-binding factor A.